The primary structure comprises 434 residues: Serine--tRNA ligase (434 aa).

241–243 (TAE) is a binding site for L-serine. Position 272–274 (272–274 (RSE)) interacts with ATP. An L-serine-binding site is contributed by E295. 359-362 (EISS) is an ATP binding site. S395 serves as a coordination point for L-serine.

This sequence belongs to the class-II aminoacyl-tRNA synthetase family. Type-1 seryl-tRNA synthetase subfamily. In terms of assembly, homodimer. The tRNA molecule binds across the dimer.

The protein localises to the cytoplasm. It catalyses the reaction tRNA(Ser) + L-serine + ATP = L-seryl-tRNA(Ser) + AMP + diphosphate + H(+). The enzyme catalyses tRNA(Sec) + L-serine + ATP = L-seryl-tRNA(Sec) + AMP + diphosphate + H(+). It participates in aminoacyl-tRNA biosynthesis; selenocysteinyl-tRNA(Sec) biosynthesis; L-seryl-tRNA(Sec) from L-serine and tRNA(Sec): step 1/1. In terms of biological role, catalyzes the attachment of serine to tRNA(Ser). Is also able to aminoacylate tRNA(Sec) with serine, to form the misacylated tRNA L-seryl-tRNA(Sec), which will be further converted into selenocysteinyl-tRNA(Sec). In Glaesserella parasuis serovar 5 (strain SH0165) (Haemophilus parasuis), this protein is Serine--tRNA ligase.